The sequence spans 669 residues: Dymeclin (669 aa).

The N-myristoyl glycine moiety is linked to residue Gly2.

It belongs to the dymeclin family. Post-translationally, myristoylated in vitro; myristoylation is not essential for protein targeting to Golgi compartment.

It is found in the cytoplasm. The protein localises to the golgi apparatus. Necessary for correct organization of Golgi apparatus. This is Dymeclin (dym) from Xenopus laevis (African clawed frog).